A 390-amino-acid chain; its full sequence is Carbamoyl phosphate synthase small chain (390 aa).

Residues 1–198 (MTSTPTPTPT…LGEGYAVGPE (198 aa)) form a CPSase region. L-glutamine-binding residues include Ser-53, Gly-250, and Gly-252. The Glutamine amidotransferase type-1 domain occupies 202 to 390 (RVVVLDYGVK…VGELKGRVEA (189 aa)). Cys-279 serves as the catalytic Nucleophile. L-glutamine-binding residues include Leu-280, Gln-283, Asn-321, Gly-323, and Phe-324. Catalysis depends on residues His-363 and Glu-365.

It belongs to the CarA family. As to quaternary structure, composed of two chains; the small (or glutamine) chain promotes the hydrolysis of glutamine to ammonia, which is used by the large (or ammonia) chain to synthesize carbamoyl phosphate. Tetramer of heterodimers (alpha,beta)4.

It catalyses the reaction hydrogencarbonate + L-glutamine + 2 ATP + H2O = carbamoyl phosphate + L-glutamate + 2 ADP + phosphate + 2 H(+). The enzyme catalyses L-glutamine + H2O = L-glutamate + NH4(+). It participates in amino-acid biosynthesis; L-arginine biosynthesis; carbamoyl phosphate from bicarbonate: step 1/1. The protein operates within pyrimidine metabolism; UMP biosynthesis via de novo pathway; (S)-dihydroorotate from bicarbonate: step 1/3. Small subunit of the glutamine-dependent carbamoyl phosphate synthetase (CPSase). CPSase catalyzes the formation of carbamoyl phosphate from the ammonia moiety of glutamine, carbonate, and phosphate donated by ATP, constituting the first step of 2 biosynthetic pathways, one leading to arginine and/or urea and the other to pyrimidine nucleotides. The small subunit (glutamine amidotransferase) binds and cleaves glutamine to supply the large subunit with the substrate ammonia. The chain is Carbamoyl phosphate synthase small chain from Maricaulis maris (strain MCS10) (Caulobacter maris).